Consider the following 471-residue polypeptide: Putative multidrug resistance protein MdtD (471 aa).

At 1–11 (MTDLPDSTRWQ) the chain is on the periplasmic side. A helical membrane pass occupies residues 12-32 (LWIVAFGFFMQSLDTTIVNTA). Residues 33 to 48 (LPSMAQSLGESPLHMH) lie on the Cytoplasmic side of the membrane. Residues 49–69 (MVIVSYVLTVAVMLPASGWLA) traverse the membrane as a helical segment. At 70-76 (DKVGVRN) the chain is on the periplasmic side. The helical transmembrane segment at 77–97 (IFFTAIVLFTLGSLFCALSGT) threads the bilayer. The Cytoplasmic portion of the chain corresponds to 98–101 (LNEL). A helical membrane pass occupies residues 102-124 (LLARALQGVGGAMMVPVGRLTVM). Residues 125-137 (KIVPREQYMAAMT) lie on the Periplasmic side of the membrane. The chain crosses the membrane as a helical span at residues 138 to 158 (FVTLPGQVGPLLGPALGGLLV). Residues 159 to 164 (EYASWH) are Cytoplasmic-facing. The helical transmembrane segment at 165–185 (WIFLINIPVGIIGAIATLMLM) threads the bilayer. At 186-196 (PNYTMQTRRFD) the chain is on the periplasmic side. Residues 197–217 (LSGFLLLAVGMAVLTLALDGS) traverse the membrane as a helical segment. The Cytoplasmic segment spans residues 218–224 (KGTGFSP). The chain crosses the membrane as a helical span at residues 225 to 245 (LAIAGLVAVGVVALVLYLLHA). The Periplasmic segment spans residues 246 to 262 (QNNNRALFSLKLFRTRT). A helical membrane pass occupies residues 263-283 (FSLGLAGSFAGRIGSGMLPFM). At 284 to 285 (TP) the chain is on the cytoplasmic side. The chain crosses the membrane as a helical span at residues 286–306 (VFLQIGLGFSPFHAGLMMIPM). At 307–341 (VLGSMGMKRIVVQVVNRFGYRRVLVATTLGLSLVT) the chain is on the periplasmic side. A helical membrane pass occupies residues 342 to 362 (LLFMTTALLGWYYVLPFVLFL). The Cytoplasmic portion of the chain corresponds to 363 to 395 (QGMVNSTRFSSMNTLTLKDLPDNLASSGNSLLS). A helical transmembrane segment spans residues 396-416 (MIMQLSMSIGVTIAGLLLGLF). Residues 417–430 (GSQHVSVDSGTTQT) are Periplasmic-facing. A helical membrane pass occupies residues 431 to 451 (VFMYTWLSMAFIIALPAFVFA). At 452-471 (RVPSDTHQNVAISRRKRSAQ) the chain is on the cytoplasmic side.

The protein belongs to the major facilitator superfamily. TCR/Tet family.

It localises to the cell inner membrane. In Escherichia coli O45:K1 (strain S88 / ExPEC), this protein is Putative multidrug resistance protein MdtD.